We begin with the raw amino-acid sequence, 269 residues long: Protein RKD1 (269 aa).

One can recognise an RWP-RK domain in the interval 106–195 (TTTTKKRRCR…EKMEGEENED (90 aa)). Positions 175–216 (LQKLISNVKELEKMEGEENEDKLRNALEKLEKEKKTIEKLPD) form a coiled coil. The disordered stretch occupies residues 230–269 (CFKANHKRKRRSGMSTPITSSSSSASASSSSYSSVSGFER). Residues 249 to 269 (SSSSSASASSSSYSSVSGFER) are compositionally biased toward low complexity.

It is found in the nucleus. In terms of biological role, putative transcription factor. The polypeptide is Protein RKD1 (RKD1) (Arabidopsis thaliana (Mouse-ear cress)).